Consider the following 107-residue polypeptide: MNKKELFDAFDGFSQNLMVTLADIEAMKKQVQGLVEENTILRLENTKLRERLSQLEHENLAKTSSKQGKDHLEGIYDEGFHICNFFYGQRRENDEECMFCRELLDRK.

Residues His-81, Cys-83, Cys-97, and Cys-100 each contribute to the Zn(2+) site.

Belongs to the YabA family. As to quaternary structure, homotetramer. Interacts with both DnaA and DnaN, acting as a bridge between these two proteins. Requires Zn(2+) as cofactor.

The protein localises to the cytoplasm. It localises to the nucleoid. Its function is as follows. Involved in control of chromosome replication initiation. Inhibits the cooperative binding of DnaA to the oriC region, thus negatively regulating initiation of chromosome replication. Inhibits the ability of DnaA-ATP to form a helix on DNA; does not disassemble preformed DnaA-DNA helices. Decreases the residence time of DnaA on the chromosome at its binding sites (oriC, replication forks and promoter-binding sites). Tethers DnaA to the replication machinery via the DNA polymerase beta sliding clamp subunit (dnaN). Associates with oriC and other DnaA targets on the chromosome in a DnaA-dependent manner. The protein is Replication initiation control protein YabA of Streptococcus equi subsp. zooepidemicus (strain MGCS10565).